We begin with the raw amino-acid sequence, 303 residues long: MYYGFDIGGTKIALGVFDSGRQLQWEKRVPTPRDSYDAFLDAVCELVAEADQRFGCKGSVGIGIPGMPETEDGKLYAANVPAASGKPLRADLSARLDRDVRLDNDANCFALSEAWDDEFTQYPLVMGLILGTGVGGGLVFNGKPITGKSYITGEFGHMRLPVDALTMMGLDFPLRRCGCGQHGCIENYLSGRGFAWLYQHYYHQPLQAPEIIALYDQGDEQARAHVERYLDLLAVSLGNILTIVDPDLVVIGGGLSNFPAITTQLADRLPCHLLPVARVPRIERARHGDAGGMRGAAFLHLTD.

ATP-binding positions include 4 to 11 (GFDIGGTK) and 133 to 140 (GVGGGLVF). H157, C177, C179, and C184 together coordinate Zn(2+).

This sequence belongs to the ROK (NagC/XylR) family. NagK subfamily.

The catalysed reaction is N-acetyl-D-glucosamine + ATP = N-acetyl-D-glucosamine 6-phosphate + ADP + H(+). It functions in the pathway cell wall biogenesis; peptidoglycan recycling. Catalyzes the phosphorylation of N-acetyl-D-glucosamine (GlcNAc) derived from cell-wall degradation, yielding GlcNAc-6-P. The chain is N-acetyl-D-glucosamine kinase from Shigella flexneri serotype 5b (strain 8401).